A 619-amino-acid chain; its full sequence is uncharacterized protein (619 aa).

A signal peptide spans 1–21 (MKKLIAIIAVAAVVIAGFVFT).

This is an uncharacterized protein from Archaeoglobus fulgidus (strain ATCC 49558 / DSM 4304 / JCM 9628 / NBRC 100126 / VC-16).